The primary structure comprises 127 residues: Aspartate 1-decarboxylase (127 aa).

The Schiff-base intermediate with substrate; via pyruvic acid role is filled by serine 25. Serine 25 carries the pyruvic acid (Ser) modification. Residue threonine 57 coordinates substrate. The active-site Proton donor is the tyrosine 58. Residue 73-75 (GAA) coordinates substrate.

It belongs to the PanD family. In terms of assembly, heterooctamer of four alpha and four beta subunits. Pyruvate is required as a cofactor. In terms of processing, is synthesized initially as an inactive proenzyme, which is activated by self-cleavage at a specific serine bond to produce a beta-subunit with a hydroxyl group at its C-terminus and an alpha-subunit with a pyruvoyl group at its N-terminus.

The protein localises to the cytoplasm. The catalysed reaction is L-aspartate + H(+) = beta-alanine + CO2. Its pathway is cofactor biosynthesis; (R)-pantothenate biosynthesis; beta-alanine from L-aspartate: step 1/1. In terms of biological role, catalyzes the pyruvoyl-dependent decarboxylation of aspartate to produce beta-alanine. This Bacillus licheniformis (strain ATCC 14580 / DSM 13 / JCM 2505 / CCUG 7422 / NBRC 12200 / NCIMB 9375 / NCTC 10341 / NRRL NRS-1264 / Gibson 46) protein is Aspartate 1-decarboxylase.